The primary structure comprises 423 residues: MERMLPFLALGLLVAGFCPAVLCHPNCPLDEENPTQENQDRGTHVDLGLASTNVDFAFSLYKQLVLKAPDKNVIFSPLSISTALAFLSLGAHNTTLTEILTGLRFNLTETSEAEIHQSFQHLLRTLNQSSDELQLSMGNAMFVEEQLSLLDRFMEDAKRLYGSEAFATDFQDSAAAKKLINDYVKNRTRGKITDLIKDLDSQTMMVLVNYIFFKAKWKMPFDPQDTHQSRFYLSKKKWVMVPMMSLHHLTTPYFRDEELSCTVVELKYTGNASALFILPDQDKMEEVEAMLLPETLKRWRDSLEFRRIDELYLPKFSISRAFNLENILLQLGIVEAFTSKADLSGITGARNLVVSQVVHKAVLDVFEEGTEASAATAVKITLLSALVDPMTIVRFNRPFLMIIVPTDTQNLLFISKVINPKQA.

The first 23 residues, 1–23 (MERMLPFLALGLLVAGFCPAVLC), serve as a signal peptide directing secretion. Asparagine 93, asparagine 106, asparagine 127, asparagine 186, and asparagine 271 each carry an N-linked (GlcNAc...) asparagine glycan. The segment at 369–394 (GTEASAATAVKITLLSALVDPMTIVR) is RCL.

This sequence belongs to the serpin family. In terms of assembly, interacts with DNAJC1. Plasma.

It is found in the secreted. Although its physiological function is unclear, it can inhibit neutrophil cathepsin G and mast cell chymase, both of which can convert angiotensin-1 to the active angiotensin-2. The sequence is that of Alpha-1-antichymotrypsin (SERPINA3) from Pongo abelii (Sumatran orangutan).